Consider the following 251-residue polypeptide: tRNA (guanine-N(7)-)-methyltransferase (251 aa).

E80, E105, D132, and D155 together coordinate S-adenosyl-L-methionine. The active site involves D155. Residues K159, D191, and 228–231 (TKFE) contribute to the substrate site.

It belongs to the class I-like SAM-binding methyltransferase superfamily. TrmB family.

The catalysed reaction is guanosine(46) in tRNA + S-adenosyl-L-methionine = N(7)-methylguanosine(46) in tRNA + S-adenosyl-L-homocysteine. The protein operates within tRNA modification; N(7)-methylguanine-tRNA biosynthesis. Catalyzes the formation of N(7)-methylguanine at position 46 (m7G46) in tRNA. In Histophilus somni (strain 129Pt) (Haemophilus somnus), this protein is tRNA (guanine-N(7)-)-methyltransferase.